A 390-amino-acid chain; its full sequence is DNA polymerase IV (390 aa).

Positions Val-6–Gly-187 constitute a UmuC domain. 2 residues coordinate Mg(2+): Asp-10 and Asp-105. The active site involves Glu-106.

The protein belongs to the DNA polymerase type-Y family. Monomer. It depends on Mg(2+) as a cofactor.

The protein localises to the cytoplasm. It catalyses the reaction DNA(n) + a 2'-deoxyribonucleoside 5'-triphosphate = DNA(n+1) + diphosphate. Functionally, poorly processive, error-prone DNA polymerase involved in untargeted mutagenesis. Copies undamaged DNA at stalled replication forks, which arise in vivo from mismatched or misaligned primer ends. These misaligned primers can be extended by PolIV. Exhibits no 3'-5' exonuclease (proofreading) activity. May be involved in translesional synthesis, in conjunction with the beta clamp from PolIII. This Dehalococcoides mccartyi (strain ATCC BAA-2100 / JCM 16839 / KCTC 5957 / BAV1) protein is DNA polymerase IV.